A 219-amino-acid polypeptide reads, in one-letter code: Ribose-5-phosphate isomerase A (219 aa).

Substrate is bound by residues 28-31 (TGST), 81-84 (DGAD), and 94-97 (KGGG). The Proton acceptor role is filled by glutamate 103. Residue lysine 121 participates in substrate binding.

The protein belongs to the ribose 5-phosphate isomerase family. As to quaternary structure, homodimer.

It catalyses the reaction aldehydo-D-ribose 5-phosphate = D-ribulose 5-phosphate. It participates in carbohydrate degradation; pentose phosphate pathway; D-ribose 5-phosphate from D-ribulose 5-phosphate (non-oxidative stage): step 1/1. Functionally, catalyzes the reversible conversion of ribose-5-phosphate to ribulose 5-phosphate. The sequence is that of Ribose-5-phosphate isomerase A from Pectobacterium carotovorum subsp. carotovorum (strain PC1).